The sequence spans 919 residues: uncharacterized protein (919 aa).

Over residues 1–15 (MEALILLSSQQSGSI) the composition is skewed to low complexity. Disordered stretches follow at residues 1–167 (MEAL…DLEN), 179–312 (RFKP…STPS), 415–491 (HIYE…RLSL), 553–739 (QQQQ…TIKP), 751–863 (THNE…NNII), and 883–906 (LNINHQDGPNSASSTPRLPTDHIN). A compositionally biased stretch (polar residues) spans 16–25 (KNNCASTSDI). 3 stretches are compositionally biased toward low complexity: residues 34–75 (IVIV…SSSS), 96–107 (SSPSSSPNTPKT), and 141–153 (TPTTTSTSTTPIK). The span at 154 to 167 (PVKDPKEKEKDLEN) shows a compositional bias: basic and acidic residues. The span at 186–292 (NNTNNNNNIN…QQSSPTSSQT (107 aa)) shows a compositional bias: low complexity. Over residues 420–433 (PNENNNGGSFQKPN) the composition is skewed to polar residues. Composition is skewed to low complexity over residues 450 to 471 (GVSGSPSHSPRVSQSPRVPSHP), 553 to 564 (QQQQQQQQQSSS), 573 to 589 (SQPQNSSSPRQPSQTPQ), and 618 to 635 (HMPQSPHMPHSPHLMPHS). Positions 678 to 695 (YGSSPNLNGGKGSNNFLQ) are enriched in polar residues. Low complexity predominate over residues 712–723 (SSVDSYSNSSPT). Polar residues predominate over residues 754–768 (ENYMSSPRQPLSPHN). A compositionally biased stretch (basic and acidic residues) spans 785–797 (PHEHCNYIDKNDE). Low complexity predominate over residues 798-863 (YYSNNNNNNN…NNNNNNNNII (66 aa)). The segment covering 883-899 (LNINHQDGPNSASSTPR) has biased composition (polar residues).

This is an uncharacterized protein from Dictyostelium discoideum (Social amoeba).